Here is a 934-residue protein sequence, read N- to C-terminus: Complement component C6 (934 aa).

The first 21 residues, 1–21 (MTRHLTLCFILLVMLIDKSEA), serve as a signal peptide directing secretion. 11 cysteine pairs are disulfide-bonded: Cys22-Cys61, Cys24-Cys65, Cys35-Cys73, Cys39-Cys78, Cys82-Cys117, Cys93-Cys127, Cys96-Cys133, Cys140-Cys151, Cys146-Cys164, Cys158-Cys173, and Cys180-Cys218. 2 TSP type-1 domains span residues 22-79 (CFCD…QTCP) and 81-134 (NCVL…KLCK). The 38-residue stretch at 138–175 (TNCKNKFLCDSGRCIPSKLECNGENDCGDNSDERNCGR) folds into the LDL-receptor class A domain. Residues Leu156, Asn159, Glu161, Asp163, Asp169, and Glu170 each contribute to the Ca(2+) site. Residues 176–522 (TKPVCTRIYT…EYAAKFDPCQ (347 aa)) enclose the MACPF domain. Residues 278–290 (FFPIPIFHFSEKN) traverse the membrane as a beta stranded segment. Asn324 carries N-linked (GlcNAc...) asparagine glycosylation. Disulfide bonds link Cys399–Cys420, Cys499–Cys623, Cys521–Cys570, Cys523–Cys539, Cys526–Cys541, Cys543–Cys552, Cys577–Cys611, Cys589–Cys601, Cys644–Cys686, Cys672–Cys699, Cys704–Cys746, Cys732–Cys761, Cys773–Cys823, Cys784–Cys801, Cys786–Cys837, and Cys793–Cys816. A beta stranded transmembrane segment spans residues 402-415 (YETKKLKFLYMEIH). Residues 523–553 (CAPCPNNGRPRLSGTECLCVCQSGTYGENCE) enclose the EGF-like domain. A TSP type-1 3 domain is found at 565-612 (DGNWGCWSSWSACNAAYRRSRTRECNNPAPQRGGQSCGGKDQQEEDCT). CCP stretches follow at residues 611 to 688 (CTVS…RCLP) and 689 to 765 (DRTW…EQAI). Sushi domains follow at residues 642-701 (SGCS…ECQR) and 702-763 (TSCL…TCEQ). The C5b-binding domain stretch occupies residues 642-934 (SGCSQPPLPE…EILNPGRCPD (293 aa)). The interval 766-840 (LTKSKDLCPP…FVHSGSCQEG (75 aa)) is factor I module (FIM) 1. The region spanning 785–839 (ICMSPEEDCSAYSEDLCIFDGGSSQYFTSSACKFLAGKCLNNTQSHFVHSGSCQE) is the Kazal-like 1 domain. N-linked (GlcNAc...) asparagine glycans are attached at residues Asn825, Asn855, and Asn872. Positions 858–934 (KRVSCGYNTC…EILNPGRCPD (77 aa)) are factor I module (FIM) 2. Disulfide bonds link Cys862–Cys873, Cys867–Cys919, Cys880–Cys897, Cys882–Cys932, and Cys888–Cys912. Residues 876 to 934 (HTSNCVCLLPPQCSKDENQLYCVKIGSSMREKTVNICTLGAVRCANIKVEILNPGRCPD) form the Kazal-like 2 domain.

It belongs to the complement C6/C7/C8/C9 family. In terms of assembly, component of the membrane attack complex (MAC), composed of complement C5b, C6, C7, C8A, C8B, C8G and multiple copies of the pore-forming subunit C9. All cysteine residues are assumed to be cross-linked to one another. Individual modules containing an even number of conserved cysteine residues are supposed to have disulfide linkages only within the same module.

It is found in the secreted. The protein localises to the target cell membrane. Its activity is regulated as follows. Membrane attack complex (MAC) assembly is inhibited by CD59, thereby protecting self-cells from damage during complement activation. MAC assembly is also inhibited by clusterin (CLU) chaperones that inhibit polymerization of C9. In terms of biological role, component of the membrane attack complex (MAC), a multiprotein complex activated by the complement cascade, which inserts into a target cell membrane and forms a pore, leading to target cell membrane rupture and cell lysis. The MAC is initiated by proteolytic cleavage of C5 into complement C5b in response to the classical, alternative, lectin and GZMK complement pathways. The complement pathways consist in a cascade of proteins that leads to phagocytosis and breakdown of pathogens and signaling that strengthens the adaptive immune system. Together with component C5b, involved in MAC complex assembly: complement C5b and C6 associate with the outer leaflet of target cell membrane, reducing the energy for membrane bending. This Mus musculus (Mouse) protein is Complement component C6.